We begin with the raw amino-acid sequence, 125 residues long: Interferon-induced transmembrane protein 1 (125 aa).

Topologically, residues 1–36 are cytoplasmic; the sequence is MHKEEHEVAVLGPPPSTILPRSTVINIHSETSVPDH. Ser-16 bears the Phosphoserine mark. An intramembrane region (helical) is located at residues 37-57; it reads VVWSLFNTLFLNWCCLGFIAF. S-palmitoyl cysteine attachment occurs at residues Cys-50, Cys-51, and Cys-84. Residues 58 to 86 lie on the Cytoplasmic side of the membrane; it reads AYSVKSRDRKMVGDVTGAQAYASTAKCLN. The tract at residues 84–125 is interaction with CAV1; that stretch reads CLNIWALILGILMTIGFILLLVFGSVTVYHIMLQIIQEKRGY. The chain crosses the membrane as a helical span at residues 87-107; sequence IWALILGILMTIGFILLLVFG. At 108-125 the chain is on the extracellular side; that stretch reads SVTVYHIMLQIIQEKRGY.

The protein belongs to the CD225/Dispanin family. As to quaternary structure, interacts with CD81. Part of a complex composed of CD19, CR2/CD21, CD81 and IFITM1/CD225 in the membrane of mature B-cells. Interacts with CAV1; this interaction enhances the ability of CAV1 in inhibiting ERK activation. In terms of processing, palmitoylation on membrane-proximal cysteines controls clustering in membrane compartments and antiviral activity. In terms of tissue distribution, bone (at protein level). Levels greatly elevated in colon cancer, cervical cancer, esophageal cancer and ovarian cancer. Expressed in glioma cell lines.

The protein localises to the cell membrane. Its subcellular location is the lysosome membrane. Its function is as follows. IFN-induced antiviral protein which inhibits the entry of viruses to the host cell cytoplasm, permitting endocytosis, but preventing subsequent viral fusion and release of viral contents into the cytosol. Active against multiple viruses, including influenza A virus, SARS coronaviruses (SARS-CoV and SARS-CoV-2), Marburg virus (MARV), Ebola virus (EBOV), Dengue virus (DNV), West Nile virus (WNV), human immunodeficiency virus type 1 (HIV-1) and hepatitis C virus (HCV). Can inhibit: influenza virus hemagglutinin protein-mediated viral entry, MARV and EBOV GP1,2-mediated viral entry and SARS-CoV and SARS-CoV-2 S protein-mediated viral entry. Also implicated in cell adhesion and control of cell growth and migration. Inhibits SARS-CoV-2 S protein-mediated syncytia formation. Plays a key role in the antiproliferative action of IFN-gamma either by inhibiting the ERK activation or by arresting cell growth in G1 phase in a p53-dependent manner. Acts as a positive regulator of osteoblast differentiation. In hepatocytes, IFITM proteins act in a coordinated manner to restrict HCV infection by targeting the endocytosed HCV virion for lysosomal degradation. IFITM2 and IFITM3 display anti-HCV activity that may complement the anti-HCV activity of IFITM1 by inhibiting the late stages of HCV entry, possibly in a coordinated manner by trapping the virion in the endosomal pathway and targeting it for degradation at the lysosome. This Homo sapiens (Human) protein is Interferon-induced transmembrane protein 1.